Reading from the N-terminus, the 259-residue chain is Phosphatidylglycerol--prolipoprotein diacylglyceryl transferase (259 aa).

A run of 4 helical transmembrane segments spans residues 12–32 (LSLH…VYLA), 46–66 (IIDF…IYYV), 83–103 (IWNG…VLFV), and 109–129 (VLNP…AQAI). Position 131 (Arg-131) interacts with a 1,2-diacyl-sn-glycero-3-phospho-(1'-sn-glycerol). 3 helical membrane passes run 167–187 (VPTF…IMVW), 194–214 (LLDG…RLVI), and 226–246 (GIRV…VFIF).

Belongs to the Lgt family.

Its subcellular location is the cell membrane. The catalysed reaction is L-cysteinyl-[prolipoprotein] + a 1,2-diacyl-sn-glycero-3-phospho-(1'-sn-glycerol) = an S-1,2-diacyl-sn-glyceryl-L-cysteinyl-[prolipoprotein] + sn-glycerol 1-phosphate + H(+). The protein operates within protein modification; lipoprotein biosynthesis (diacylglyceryl transfer). Functionally, catalyzes the transfer of the diacylglyceryl group from phosphatidylglycerol to the sulfhydryl group of the N-terminal cysteine of a prolipoprotein, the first step in the formation of mature lipoproteins. The chain is Phosphatidylglycerol--prolipoprotein diacylglyceryl transferase from Streptococcus equi subsp. zooepidemicus (strain H70).